Consider the following 410-residue polypeptide: Argininosuccinate synthase (410 aa).

ATP is bound by residues 11–19 and Ala-37; that span reads AYSGGLDTS. The L-citrulline site is built by Tyr-88 and Ser-93. 116 to 124 lines the ATP pocket; it reads SHGCTGKGN. L-aspartate contacts are provided by Thr-120, Asn-124, and Asp-125. An L-citrulline-binding site is contributed by Asn-124. L-citrulline-binding residues include Arg-128, Ser-181, Ser-190, Glu-269, and Tyr-281.

The protein belongs to the argininosuccinate synthase family. Type 1 subfamily. Homotetramer.

The protein localises to the cytoplasm. The catalysed reaction is L-citrulline + L-aspartate + ATP = 2-(N(omega)-L-arginino)succinate + AMP + diphosphate + H(+). It participates in amino-acid biosynthesis; L-arginine biosynthesis; L-arginine from L-ornithine and carbamoyl phosphate: step 2/3. In Schizosaccharomyces pombe (strain 972 / ATCC 24843) (Fission yeast), this protein is Argininosuccinate synthase (arg12).